A 331-amino-acid chain; its full sequence is Neurogenic differentiation factor 4 (331 aa).

Residues Met1–Ala80 form a disordered region. Over residues Asp52–Gly64 the composition is skewed to acidic residues. Basic residues predominate over residues Pro67 to Lys79. Positions Ala87 to Leu139 constitute a bHLH domain. The tract at residues Thr246–Leu265 is disordered.

As to quaternary structure, efficient DNA binding requires dimerization with another bHLH protein. Serine or threonine phosphorylation within the basic region may regulate neurogenic activity.

It is found in the nucleus. Probably acts as a transcriptional activator. Mediates neuronal differentiation. Required for the regulation of amacrine cell fate specification in the retina. The protein is Neurogenic differentiation factor 4 (NEUROD4) of Homo sapiens (Human).